A 208-amino-acid polypeptide reads, in one-letter code: dTTP/UTP pyrophosphatase (208 aa).

Aspartate 79 serves as the catalytic Proton acceptor.

It belongs to the Maf family. YhdE subfamily. Requires a divalent metal cation as cofactor.

It is found in the cytoplasm. The enzyme catalyses dTTP + H2O = dTMP + diphosphate + H(+). It catalyses the reaction UTP + H2O = UMP + diphosphate + H(+). Its function is as follows. Nucleoside triphosphate pyrophosphatase that hydrolyzes dTTP and UTP. May have a dual role in cell division arrest and in preventing the incorporation of modified nucleotides into cellular nucleic acids. The sequence is that of dTTP/UTP pyrophosphatase from Mesorhizobium japonicum (strain LMG 29417 / CECT 9101 / MAFF 303099) (Mesorhizobium loti (strain MAFF 303099)).